Consider the following 311-residue polypeptide: tRNA-cytidine(32) 2-sulfurtransferase (311 aa).

A PP-loop motif motif is present at residues 47-52; sequence SGGKDS. Cysteine 122, cysteine 125, and cysteine 213 together coordinate [4Fe-4S] cluster.

Belongs to the TtcA family. In terms of assembly, homodimer. It depends on Mg(2+) as a cofactor. Requires [4Fe-4S] cluster as cofactor.

It is found in the cytoplasm. It catalyses the reaction cytidine(32) in tRNA + S-sulfanyl-L-cysteinyl-[cysteine desulfurase] + AH2 + ATP = 2-thiocytidine(32) in tRNA + L-cysteinyl-[cysteine desulfurase] + A + AMP + diphosphate + H(+). It functions in the pathway tRNA modification. Functionally, catalyzes the ATP-dependent 2-thiolation of cytidine in position 32 of tRNA, to form 2-thiocytidine (s(2)C32). The sulfur atoms are provided by the cysteine/cysteine desulfurase (IscS) system. In Salmonella choleraesuis (strain SC-B67), this protein is tRNA-cytidine(32) 2-sulfurtransferase.